The following is a 204-amino-acid chain: uncharacterized protein (204 aa).

Residues 160–180 form a helical membrane-spanning segment; it reads GLTVAAIASVVVAGAVTYLVV.

To M.pneumoniae MPN_373 C-terminal region.

It is found in the cell membrane. This is an uncharacterized protein from Mycoplasma pneumoniae (strain ATCC 29342 / M129 / Subtype 1) (Mycoplasmoides pneumoniae).